A 539-amino-acid chain; its full sequence is MGHQESPLTRAAAGGAAYIKRLRKVLSWRELGDGHGNLEAEASPGSVAVITRAAPRRATRSARLPASRPTRLCRQARLGTDHPPARAPRGNRFARKRNSAGQITIQGPAPPHLGARRRDEARGARAAPLLLPPPPAAMETGKENGARRGTKSPERKRRSPVQRVLCEKLRPAAQAMDPAGAEVPGEAFLARRRPDGGGGDVPARPRYSLLAEIGRGSYGVVYEAVAGRSGARVAVKKIRCDAPENVELALAEFWALTSLKRRHQNIVQFEECVLQRNGLAQRMSHGNKNSQLYLRLVETSLKGERILGYAEEPCYLWFVMEYCEGGDLNQYVLSRRPDPATNKSFMLQLTSAIAFLHKNHIVHRDLKPDNILITERSGTPILKVADFGLSKVCAGLAPRGKEGNQDNKNVNVNKYWLSSACGSDFYMAPEVWEGHYTAKADIFALGIIIWAMIERITFIDSETKKELLGTYIKQGTEIVPVGEALLENPKMELHIPQKRRTSMSEGVKQLLKDMLAANPQDRPDAFELETRMDQVTCAA.

The segment at 103–161 (ITIQGPAPPHLGARRRDEARGARAAPLLLPPPPAAMETGKENGARRGTKSPERKRRSPV) is disordered. The segment covering 148 to 160 (RGTKSPERKRRSP) has biased composition (basic residues). Residues 207–535 (YSLLAEIGRG…FELETRMDQV (329 aa)) form the Protein kinase domain. Residues 213 to 221 (IGRGSYGVV) and Lys236 each bind ATP. The Proton acceptor role is filled by Asp365.

The protein belongs to the protein kinase superfamily. Ser/Thr protein kinase family. In terms of assembly, interacts with PDLIM1/CLP-36. Autophosphorylated.

It is found in the nucleus. Its subcellular location is the nucleolus. The protein localises to the cytoplasm. It carries out the reaction L-seryl-[protein] + ATP = O-phospho-L-seryl-[protein] + ADP + H(+). The catalysed reaction is L-threonyl-[protein] + ATP = O-phospho-L-threonyl-[protein] + ADP + H(+). This Mus musculus (Mouse) protein is Serine/threonine-protein kinase 35 (Stk35).